We begin with the raw amino-acid sequence, 533 residues long: Tyrosine ammonia-lyase (533 aa).

Catalysis depends on Tyr-57, which acts as the Proton donor/acceptor. His-87 serves as a coordination point for substrate. The 5-imidazolinone (Ala-Gly) cross-link spans 146 to 148 (ASG). Position 147 is a 2,3-didehydroalanine (Ser) (Ser-147). Positions 200 and 305 each coordinate substrate.

This sequence belongs to the TAL/TAM family. Homotetramer; dimer of dimers. In terms of processing, contains an active site 4-methylidene-imidazol-5-one (MIO), which is formed autocatalytically by cyclization and dehydration of residues Ala-Ser-Gly.

The enzyme catalyses L-tyrosine = (E)-4-coumarate + NH4(+). It carries out the reaction L-tyrosine = 3-amino-3-(4-hydroxyphenyl)propanoate. Its function is as follows. Has ammonia-lyase and, to a lesser extent, aminomutase activity. Catalyzes the rearrangement of L-tyrosine to R-beta-tyrosine and S-beta-tyrosine. Does not accept L-histidine or L-phenylalanine as substrates. This is Tyrosine ammonia-lyase from Cupriavidus metallidurans (strain ATCC 43123 / DSM 2839 / NBRC 102507 / CH34) (Ralstonia metallidurans).